Consider the following 207-residue polypeptide: UPF0319 protein VV2327 (207 aa).

The signal sequence occupies residues 1–18 (MLRVLGLAGMLMSFNIHA).

The protein belongs to the UPF0319 family.

This Vibrio vulnificus (strain YJ016) protein is UPF0319 protein VV2327.